The sequence spans 500 residues: MTIFNNYEVWFVIGSQHLYGPEALRQVTQHAEHVVNALNAEAKLPCKLVLKPLGTTPDEITHICRDANYDDKCAGMVVWLHTFSPAKMWINGLTILNKPLLQFHTQFNASLPWDSIDMDFMNLNQTAHGGREFGFIGARMRQQHAVVTGHWQDSQAQKRIGSWMRQAVSKQDTRHLKVVRFGDNMREVAVTDGDKVAAQIKFGFSVNTWAVGDLVQVVNEISDGDVSALVDEYESSYRLTAAAQIKGDKRQNVLDAARIELGMKRFLEQGGFHAFTTTFEDLHGLKQLPGLAVQRLMQQGYGFAGEGDWKTAALLRIMKVMSTGLQGGTSFMEDYTYHFENGNDLVLGSHMLEVCPSIAVEEKPILDVQYLGIGGKADPARLIFNTRTGPAINASLIDLGDRFRLLVNCVDTVETPHSLPKLPVANALWKAQPDLPTASEAWIVAGGAHHTVFSHSLDLNDMRQFAELHDIELTVIDNDTRLPAFKDALRWNEVYYGSKR.

4 residues coordinate Mn(2+): E306, E333, H350, and H450.

This sequence belongs to the arabinose isomerase family. As to quaternary structure, homohexamer. Requires Mn(2+) as cofactor.

It carries out the reaction beta-L-arabinopyranose = L-ribulose. Its pathway is carbohydrate degradation; L-arabinose degradation via L-ribulose; D-xylulose 5-phosphate from L-arabinose (bacterial route): step 1/3. Catalyzes the conversion of L-arabinose to L-ribulose. This Enterobacter sp. (strain 638) protein is L-arabinose isomerase.